We begin with the raw amino-acid sequence, 121 residues long: MTRQAGSSWLLRGLLLFALFASGVAPFNWDLPEPRSRASKIRVHPRGNLWATGHFMGKKSLEPPSLSLVGTAPPNTPRDQRLQLSHDLLRILLRKKALGMNFSGPAPPIQYRRLLEPLLQK.

Positions 1–24 (MTRQAGSSWLLRGLLLFALFASGV) are cleaved as a signal peptide. At Met-56 the chain carries Methionine amide. A propeptide spanning residues 60-121 (SLEPPSLSLV…RRLLEPLLQK (62 aa)) is cleaved from the precursor.

It belongs to the bombesin/neuromedin-B/ranatensin family. In terms of tissue distribution, in the hindbrain, expressed in the medulla surrounding the lateral half of the facial nucleus. Also expressed in the olfactory bulb and hippocampus. Detected in a subset of neurons distributed throughout the retrotrapezoid nucleus/parafacial respiratory group (RTN/pFRG). Within the RTN/pFRG, expressed in neuronal subpopulations distinct from those expressing Grp. Expressed in lung.

The protein resides in the secreted. It localises to the cell projection. The protein localises to the neuron projection. Its function is as follows. Stimulates smooth muscle contraction. Induces sighing by acting directly on the pre-Botzinger complex, a cluster of several thousand neurons in the ventrolateral medulla responsible for inspiration during respiratory activity. Contributes to the induction of sneezing following exposure to chemical irritants or allergens which causes release of NMB by nasal sensory neurons and activation of NMBR-expressing neurons in the sneeze-evoking region of the brainstem. These in turn activate neurons of the caudal ventral respiratory group, giving rise to the sneeze reflex. Contributes to induction of acute itch, possibly through activation of the NMBR receptor on dorsal root ganglion neurons. Increases expression of NMBR and steroidogenic mediators STAR, CYP11A1 and HSD3B1 in Leydig cells, induces secretion of testosterone by Leydig cells and also promotes Leydig cell proliferation. Plays a role in the innate immune response to influenza A virus infection by enhancing interferon alpha expression and reducing expression of IL6. Plays a role in CSF1-induced proliferation of osteoclast precursors by contributing to the positive regulation of the expression of the CSF1 receptor CSF1R. In Mus musculus (Mouse), this protein is Neuromedin-B (Nmb).